The sequence spans 500 residues: Metal transporter Nramp3.1 (500 aa).

12 helical membrane passes run 51 to 71 (LWLFTGPGFLMCIAFLDPGNL), 79 to 99 (AIAGYSLLWLLLWATAMGLLV), 128 to 148 (MILWIMAELALIGADIQEVIG), 160 to 180 (VLPLWAGVIITASDCFIFLFL), 188 to 208 (LEAAFGILIGIMAVTFAWMFA), 234 to 254 (AVGVVGCIIMPHNVFLHSALV), 280 to 300 (AALAISFMINLFVTTIFAKGF), 322 to 342 (YGGGFFPILYIWGIGLLAAGQ), 370 to 390 (ALITRSCAIIPTIIVALVFDT), 401 to 421 (WLNMLQSIQIPFALIPLLCLV), 439 to 459 (VSWLVAALVMLINGYLLLDFF), and 467 to 487 (VFTTVVCAFTGAYVTFIIYLI).

The protein belongs to the NRAMP (TC 2.A.55) family. As to expression, expressed in roots, stems, buds and leaves.

It localises to the golgi apparatus. The protein resides in the trans-Golgi network membrane. The catalysed reaction is Mn(2+)(in) = Mn(2+)(out). It catalyses the reaction Fe(2+)(in) = Fe(2+)(out). Its function is as follows. Divalent metal transporter. Can transport manganese (Mn) and iron (Fe). Involved in the control of cell-to-cell transport of manganese (Mn) between organs and tissues to monitor Mn homeostasis. The chain is Metal transporter Nramp3.1 from Populus trichocarpa (Western balsam poplar).